Here is a 963-residue protein sequence, read N- to C-terminus: Exportin-T (963 aa).

Methionine 1 carries the post-translational modification N-acetylmethionine. The residue at position 635 (lysine 635) is an N6-acetyllysine.

This sequence belongs to the exportin family. In terms of assembly, found in a complex with XPOT, Ran and tRNA. Probably found in a complex with nucleoporins. Interacts with Ran and tRNA in a GTP-dependent manner.

Its subcellular location is the nucleus. The protein resides in the cytoplasm. Functionally, mediates the nuclear export of aminoacylated tRNAs. In the nucleus binds to tRNA and to the GTPase Ran in its active GTP-bound form. Docking of this trimeric complex to the nuclear pore complex (NPC) is mediated through binding to nucleoporins. Upon transit of a nuclear export complex into the cytoplasm, disassembling of the complex and hydrolysis of Ran-GTP to Ran-GDP (induced by RANBP1 and RANGAP1, respectively) cause release of the tRNA from the export receptor. XPOT then return to the nuclear compartment and mediate another round of transport. The directionality of nuclear export is thought to be conferred by an asymmetric distribution of the GTP- and GDP-bound forms of Ran between the cytoplasm and nucleus. The polypeptide is Exportin-T (Xpot) (Mus musculus (Mouse)).